The chain runs to 298 residues: Acetylglutamate kinase (298 aa).

Residues glycine 69–glycine 70, arginine 91, and asparagine 196 each bind substrate.

Belongs to the acetylglutamate kinase family. ArgB subfamily.

The protein localises to the cytoplasm. It catalyses the reaction N-acetyl-L-glutamate + ATP = N-acetyl-L-glutamyl 5-phosphate + ADP. It functions in the pathway amino-acid biosynthesis; L-arginine biosynthesis; N(2)-acetyl-L-ornithine from L-glutamate: step 2/4. Functionally, catalyzes the ATP-dependent phosphorylation of N-acetyl-L-glutamate. This is Acetylglutamate kinase from Bradyrhizobium sp. (strain ORS 278).